Here is a 211-residue protein sequence, read N- to C-terminus: uncharacterized protein (211 aa).

Residues 105–143 are a coiled coil; it reads IEENEFDKVRKSSDKLINEIEKTKSSLREDVKTALSEVR. Residues 191–211 traverse the membrane as a helical segment; the sequence is QWFTGFVGVVSSVVLIILFYF.

This sequence belongs to the CCDC90 family.

It localises to the mitochondrion. It is found in the membrane. This is an uncharacterized protein from Schizosaccharomyces pombe (strain 972 / ATCC 24843) (Fission yeast).